The chain runs to 169 residues: NADH-quinone oxidoreductase subunit I (169 aa).

4Fe-4S ferredoxin-type domains are found at residues 61–90 (RKYK…IEAQ) and 100–129 (VRYD…EGPN). Cys-70, Cys-73, Cys-76, Cys-80, Cys-109, Cys-112, Cys-115, and Cys-119 together coordinate [4Fe-4S] cluster.

It belongs to the complex I 23 kDa subunit family. In terms of assembly, NDH-1 is composed of 14 different subunits. Subunits NuoA, H, J, K, L, M, N constitute the membrane sector of the complex. [4Fe-4S] cluster serves as cofactor.

The protein resides in the cell inner membrane. The enzyme catalyses a quinone + NADH + 5 H(+)(in) = a quinol + NAD(+) + 4 H(+)(out). Functionally, NDH-1 shuttles electrons from NADH, via FMN and iron-sulfur (Fe-S) centers, to quinones in the respiratory chain. The immediate electron acceptor for the enzyme in this species is believed to be ubiquinone. Couples the redox reaction to proton translocation (for every two electrons transferred, four hydrogen ions are translocated across the cytoplasmic membrane), and thus conserves the redox energy in a proton gradient. This chain is NADH-quinone oxidoreductase subunit I, found in Ehrlichia chaffeensis (strain ATCC CRL-10679 / Arkansas).